The following is a 161-amino-acid chain: Lipoprotein signal peptidase (161 aa).

Transmembrane regions (helical) follow at residues 6–26 (ILFL…KFYV), 67–87 (GLFF…YLIK), and 90–110 (VSDL…MGNL). Active-site residues include Asp-121 and Asp-139. A helical transmembrane segment spans residues 134–154 (AFNIADTAISIGVLFLVVDMI).

The protein belongs to the peptidase A8 family.

Its subcellular location is the cell inner membrane. The enzyme catalyses Release of signal peptides from bacterial membrane prolipoproteins. Hydrolyzes -Xaa-Yaa-Zaa-|-(S,diacylglyceryl)Cys-, in which Xaa is hydrophobic (preferably Leu), and Yaa (Ala or Ser) and Zaa (Gly or Ala) have small, neutral side chains.. It participates in protein modification; lipoprotein biosynthesis (signal peptide cleavage). This protein specifically catalyzes the removal of signal peptides from prolipoproteins. This Syntrophus aciditrophicus (strain SB) protein is Lipoprotein signal peptidase.